Here is a 68-residue protein sequence, read N- to C-terminus: Arabinogalactan peptide 1 (68 aa).

A signal peptide spans 1–30 (MAGQLKSKIVAVAVAAVVVVASSLVGTASA). Residue Ser-40 is the site of GPI-anchor amidated serine attachment. Residues 41 to 68 (GATATAAAAPAFAAVSVAAAALGGYLFC) constitute a propeptide, removed in mature form.

It belongs to the AG-peptide AGP family. O-glycosylated on hydroxyprolines; noncontiguous hydroxylproline residues are glycosylated with arabinogalactan. Expressed in roots, stems, flowers and seeds.

Its subcellular location is the vacuole. The protein resides in the aleurone grain membrane. In terms of biological role, proteoglycan that seems to be implicated in diverse developmental roles such as differentiation, cell-cell recognition, embryogenesis and programmed cell death. This is Arabinogalactan peptide 1 (AGPEP1) from Oryza sativa subsp. japonica (Rice).